The following is a 198-amino-acid chain: Thymidine kinase (198 aa).

Residues 15 to 22 and 87 to 90 contribute to the ATP site; these read GCMFSGKT and DEAQ. Glu-88 (proton acceptor) is an active-site residue. Positions 144, 147, 182, and 185 each coordinate Zn(2+).

It belongs to the thymidine kinase family. As to quaternary structure, homotetramer.

It localises to the cytoplasm. It carries out the reaction thymidine + ATP = dTMP + ADP + H(+). The protein is Thymidine kinase of Coprothermobacter proteolyticus (strain ATCC 35245 / DSM 5265 / OCM 4 / BT).